Here is a 181-residue protein sequence, read N- to C-terminus: 3-hydroxyanthranilate 3,4-dioxygenase (181 aa).

Arg-46 is a binding site for O2. Residues His-50, Glu-56, and His-95 each coordinate Fe cation. Position 56 (Glu-56) interacts with substrate. 2 residues coordinate substrate: Arg-99 and Glu-109.

The protein belongs to the 3-HAO family. It depends on Fe(2+) as a cofactor.

It is found in the cytoplasm. The catalysed reaction is 3-hydroxyanthranilate + O2 = (2Z,4Z)-2-amino-3-carboxymuconate 6-semialdehyde. It participates in cofactor biosynthesis; NAD(+) biosynthesis; quinolinate from L-kynurenine: step 3/3. Functionally, catalyzes the oxidative ring opening of 3-hydroxyanthranilate to 2-amino-3-carboxymuconate semialdehyde, which spontaneously cyclizes to quinolinate. The sequence is that of 3-hydroxyanthranilate 3,4-dioxygenase from Mycosarcoma maydis (Corn smut fungus).